The primary structure comprises 492 residues: Phosphoenolpyruvate carboxylase (492 aa).

Belongs to the PEPCase type 2 family. As to quaternary structure, homotetramer. Mg(2+) is required as a cofactor.

The catalysed reaction is oxaloacetate + phosphate = phosphoenolpyruvate + hydrogencarbonate. Functionally, catalyzes the irreversible beta-carboxylation of phosphoenolpyruvate (PEP) to form oxaloacetate (OAA), a four-carbon dicarboxylic acid source for the tricarboxylic acid cycle. In Halobacterium salinarum (strain ATCC 29341 / DSM 671 / R1), this protein is Phosphoenolpyruvate carboxylase.